We begin with the raw amino-acid sequence, 62 residues long: Translational regulator CsrA (62 aa).

It belongs to the CsrA/RsmA family. Homodimer; the beta-strands of each monomer intercalate to form a hydrophobic core, while the alpha-helices form wings that extend away from the core.

The protein localises to the cytoplasm. A key translational regulator that binds mRNA to regulate translation initiation and/or mRNA stability. Mediates global changes in gene expression, shifting from rapid growth to stress survival by linking envelope stress, the stringent response and the catabolite repression systems. Usually binds in the 5'-UTR; binding at or near the Shine-Dalgarno sequence prevents ribosome-binding, repressing translation, binding elsewhere in the 5'-UTR can activate translation and/or stabilize the mRNA. Its function is antagonized by small RNA(s). The sequence is that of Translational regulator CsrA from Pasteurella multocida (strain Pm70).